The chain runs to 252 residues: Probable transcriptional regulatory protein all4276 (252 aa).

It belongs to the TACO1 family.

The protein localises to the cytoplasm. The chain is Probable transcriptional regulatory protein all4276 from Nostoc sp. (strain PCC 7120 / SAG 25.82 / UTEX 2576).